The sequence spans 186 residues: Large ribosomal subunit protein uL5c (186 aa).

Belongs to the universal ribosomal protein uL5 family. In terms of assembly, part of the 50S ribosomal subunit; contacts the 5S rRNA.

The protein localises to the plastid. It localises to the chloroplast. Binds 5S rRNA, forms part of the central protuberance of the 50S subunit. The polypeptide is Large ribosomal subunit protein uL5c (rpl5) (Chaetosphaeridium globosum (Charophycean green alga)).